Here is a 254-residue protein sequence, read N- to C-terminus: 5'-methylthioadenosine/S-adenosylhomocysteine nucleosidase (254 aa).

At methionine 1 the chain carries N-acetylmethionine. The active-site Proton acceptor is the glutamate 25. S-methyl-5'-thioadenosine is bound by residues threonine 103 and lysine 186–glutamate 189. Adenine-binding residues include lysine 186 and aspartate 212. Catalysis depends on aspartate 212, which acts as the Proton donor.

Belongs to the PNP/UDP phosphorylase family. MtnN subfamily. In terms of assembly, homodimer.

The enzyme catalyses S-methyl-5'-thioadenosine + H2O = 5-(methylsulfanyl)-D-ribose + adenine. It catalyses the reaction S-adenosyl-L-homocysteine + H2O = S-(5-deoxy-D-ribos-5-yl)-L-homocysteine + adenine. It carries out the reaction 5'-deoxyadenosine + H2O = 5-deoxy-D-ribose + adenine. The protein operates within amino-acid biosynthesis; L-methionine biosynthesis via salvage pathway; S-methyl-5-thio-alpha-D-ribose 1-phosphate from S-methyl-5'-thioadenosine (hydrolase route): step 1/2. Its function is as follows. Enzyme of the methionine cycle that catalyzes the irreversible cleavage of the glycosidic bond in 5'-methylthioadenosine (MTA) and S-adenosylhomocysteine (SAH/AdoHcy) to a lesser extent, to adenine and the corresponding thioribose, 5'-methylthioribose and S-ribosylhomocysteine, respectively. Contributes to the maintenance of AdoMet homeostasis and is required to sustain high rates of ethylene synthesis. This Arabidopsis thaliana (Mouse-ear cress) protein is 5'-methylthioadenosine/S-adenosylhomocysteine nucleosidase (MTN2).